Reading from the N-terminus, the 288-residue chain is Peptidyl-tRNA hydrolase, chloroplastic (288 aa).

The transit peptide at 1–55 (MKAVAFPAKIANLSFPSNCCSLFFRSPATFLSPALPCRKLTKGIRGLEGLMSQCL) directs the protein to the chloroplast. Tyr-107 is a tRNA binding site. Catalysis depends on His-112, which acts as the Proton acceptor. TRNA contacts are provided by Phe-157, Asn-159, and Asn-205.

It belongs to the PTH family. In terms of assembly, monomer.

Its subcellular location is the plastid. It is found in the chloroplast stroma. The catalysed reaction is an N-acyl-L-alpha-aminoacyl-tRNA + H2O = an N-acyl-L-amino acid + a tRNA + H(+). Functionally, the natural substrate for this enzyme may be peptidyl-tRNAs which drop off the ribosome during protein synthesis. The polypeptide is Peptidyl-tRNA hydrolase, chloroplastic (Arabidopsis thaliana (Mouse-ear cress)).